A 513-amino-acid chain; its full sequence is Activin receptor type-2A (513 aa).

An N-terminal signal peptide occupies residues 1-19 (MGAAAKLAFAVFLISCSSG). At 20 to 135 (AILGRSETQE…TSNPVTPKPP (116 aa)) the chain is on the extracellular side. 5 cysteine pairs are disulfide-bonded: cysteine 30-cysteine 60, cysteine 50-cysteine 78, cysteine 85-cysteine 104, cysteine 91-cysteine 103, and cysteine 105-cysteine 110. Residues asparagine 43 and asparagine 66 are each glycosylated (N-linked (GlcNAc...) asparagine). The helical transmembrane segment at 136–161 (YYNILLYSLVPLMLIAGIVICAFWVY) threads the bilayer. The Cytoplasmic portion of the chain corresponds to 162 to 513 (RHHKMAYPPV…VDFPPKESSL (352 aa)). Positions 192-485 (LQLLEVKARG…GERITQMQRL (294 aa)) constitute a Protein kinase domain. Residues 198-206 (KARGRFGCV) and lysine 219 each bind ATP. Aspartate 322 serves as the catalytic Proton acceptor.

The protein belongs to the protein kinase superfamily. TKL Ser/Thr protein kinase family. TGFB receptor subfamily. As to quaternary structure, part of a complex consisting of MAGI2/ARIP1, ACVR2A, ACVR1B and SMAD3. Interacts with MAGI2/ARIP1. Interacts with type I receptor ACVR1. Interacts with BMP7. Interacts with TSC22D1/TSC-22. Interacts with activin A/INHBA. The cofactor is Mg(2+). It depends on Mn(2+) as a cofactor.

It is found in the cell membrane. The enzyme catalyses L-threonyl-[receptor-protein] + ATP = O-phospho-L-threonyl-[receptor-protein] + ADP + H(+). It carries out the reaction L-seryl-[receptor-protein] + ATP = O-phospho-L-seryl-[receptor-protein] + ADP + H(+). Functionally, on ligand binding, forms a receptor complex consisting of two type II and two type I transmembrane serine/threonine kinases. Type II receptors phosphorylate and activate type I receptors which autophosphorylate, then bind and activate SMAD transcriptional regulators. Receptor for activin A, activin B and inhibin A. Mediates induction of adipogenesis by GDF6. The polypeptide is Activin receptor type-2A (ACVR2A) (Bos taurus (Bovine)).